Here is a 314-residue protein sequence, read N- to C-terminus: Probable cell division protein WhiA (314 aa).

A DNA-binding region (H-T-H motif) is located at residues 275 to 309; the sequence is SLKELGELVTSGAISKSGVNHRLKKIDEFAEKIKR.

Belongs to the WhiA family.

In terms of biological role, involved in cell division and chromosome segregation. The chain is Probable cell division protein WhiA from Oceanobacillus iheyensis (strain DSM 14371 / CIP 107618 / JCM 11309 / KCTC 3954 / HTE831).